The primary structure comprises 503 residues: Cysteine desulfurase, mitochondrial (503 aa).

The N-terminal 27 residues, 1–27 (MSNIAPQVLRHASRACSRRLSLSASLV), are a transit peptide targeting the mitochondrion. Low complexity predominate over residues 34 to 50 (RTVTGSGSGGRRYVSGS). The disordered stretch occupies residues 34–58 (RTVTGSGSGGRRYVSGSQRHNAQAQ). Pyridoxal 5'-phosphate-binding positions include 172–173 (AT), Asn254, Gln282, and 302–304 (SGH). Residue Lys305 is modified to N6-(pyridoxal phosphate)lysine. Pyridoxal 5'-phosphate is bound at residue Thr342. The active-site Cysteine persulfide intermediate is the Cys427. Cys427 contributes to the [2Fe-2S] cluster binding site.

This sequence belongs to the class-V pyridoxal-phosphate-dependent aminotransferase family. NifS/IscS subfamily. The cofactor is pyridoxal 5'-phosphate.

Its subcellular location is the mitochondrion. It catalyses the reaction (sulfur carrier)-H + L-cysteine = (sulfur carrier)-SH + L-alanine. Functionally, catalyzes the removal of elemental sulfur from cysteine to produce alanine. It supplies the inorganic sulfur for iron-sulfur (Fe-S) clusters. Plays a role in both tRNA-processing and mitochondrial metabolism. Involved in the 2-thio-modification of both 5-carboxymethylaminomethyl-2-thiouridine in mitochondrial tRNAs and 5-methoxycarbonylmethyl-2-thiouridine (mcm5s2U) in cytoplasmic tRNAs. The polypeptide is Cysteine desulfurase, mitochondrial (Arthroderma benhamiae (strain ATCC MYA-4681 / CBS 112371) (Trichophyton mentagrophytes)).